The following is a 388-amino-acid chain: Chorismate synthase (388 aa).

Residues arginine 39 and arginine 45 each coordinate NADP(+). FMN contacts are provided by residues arginine 130 to serine 132, asparagine 251 to alanine 252, glycine 296, lysine 311 to threonine 315, and arginine 337.

Belongs to the chorismate synthase family. As to quaternary structure, homotetramer. Requires FMNH2 as cofactor.

It carries out the reaction 5-O-(1-carboxyvinyl)-3-phosphoshikimate = chorismate + phosphate. The protein operates within metabolic intermediate biosynthesis; chorismate biosynthesis; chorismate from D-erythrose 4-phosphate and phosphoenolpyruvate: step 7/7. Catalyzes the anti-1,4-elimination of the C-3 phosphate and the C-6 proR hydrogen from 5-enolpyruvylshikimate-3-phosphate (EPSP) to yield chorismate, which is the branch point compound that serves as the starting substrate for the three terminal pathways of aromatic amino acid biosynthesis. This reaction introduces a second double bond into the aromatic ring system. In Streptococcus pyogenes serotype M28 (strain MGAS6180), this protein is Chorismate synthase.